The primary structure comprises 298 residues: uncharacterized protein (298 aa).

Active-site charge relay system residues include threonine 43 and tyrosine 105. Tyrosine 131 acts as the Proton donor in catalysis. The active-site Schiff-base intermediate with substrate is lysine 159.

This sequence belongs to the DapA family. Homotetramer.

It localises to the cytoplasm. This is an uncharacterized protein from Pyrococcus furiosus (strain ATCC 43587 / DSM 3638 / JCM 8422 / Vc1).